The following is a 172-amino-acid chain: Transcriptional repressor NrdR (172 aa).

Residues 3–34 (CPFCRHPDSRVVDSRTTDDGTSIRRRRQCPDC) fold into a zinc finger. One can recognise an ATP-cone domain in the interval 46 to 136 (LMVIKRSGVT…VYRAFDSLED (91 aa)). Residues 152–172 (ERSGGGTCGTGTVPVPAGTAD) are disordered. The segment covering 161–172 (TGTVPVPAGTAD) has biased composition (low complexity).

Belongs to the NrdR family. Requires Zn(2+) as cofactor.

Negatively regulates transcription of bacterial ribonucleotide reductase nrd genes and operons by binding to NrdR-boxes. In Streptomyces clavuligerus, this protein is Transcriptional repressor NrdR.